The primary structure comprises 190 residues: Imidazoleglycerol-phosphate dehydratase (190 aa).

This sequence belongs to the imidazoleglycerol-phosphate dehydratase family.

The protein resides in the cytoplasm. It catalyses the reaction D-erythro-1-(imidazol-4-yl)glycerol 3-phosphate = 3-(imidazol-4-yl)-2-oxopropyl phosphate + H2O. Its pathway is amino-acid biosynthesis; L-histidine biosynthesis; L-histidine from 5-phospho-alpha-D-ribose 1-diphosphate: step 6/9. The polypeptide is Imidazoleglycerol-phosphate dehydratase (Wolinella succinogenes (strain ATCC 29543 / DSM 1740 / CCUG 13145 / JCM 31913 / LMG 7466 / NCTC 11488 / FDC 602W) (Vibrio succinogenes)).